We begin with the raw amino-acid sequence, 95 residues long: RING finger protein Z (95 aa).

Gly2 carries the N-myristoyl glycine; by host lipid modification. The segment at 38–74 adopts an RING-type; atypical zinc-finger fold; that stretch reads CKSCWFANKGLIKCSNHYLCLKCLTAMLSRSDYCGIC. The PTAP/PSAP motif signature appears at 88 to 91; sequence PSAP.

The protein belongs to the arenaviridae Z protein family. Interacts with protein NP; this interaction probably directs the encapsidated genome to budding sites. Interacts (via RING domain) with polymerase L; this interaction inhibits viral transcription and replication, Z partially blocks the product exit tunnel for the releasing nascent RNA product. Interacts with the glycoprotein complex; this interaction plays a role in virion budding. Interacts with host eIF4E; this interaction results in eIF4E reduced affinity for its substrate, the 5'-m7 G cap structure. Interacts (via late-budding domain) with host TSG101; this interaction is essential for budding and release of viral particles. Interacts with host RPLP0; this interaction may serve to load ribosome-like particles inside the virion. Interacts with host PML; this interaction induces PML bodies redistribution in the cytoplasm upon viral infection. In terms of processing, myristoylation is required for the role of RING finger protein Z in assembly and budding.

Its subcellular location is the virion. It is found in the host cytoplasm. The protein localises to the host perinuclear region. It localises to the host cell membrane. Functionally, plays a crucial role in virion assembly and budding. Expressed late in the virus life cycle, it acts as an inhibitor of viral transcription and RNA synthesis by interacting with the viral polymerase L. Presumably recruits the NP encapsidated genome to cellular membranes at budding sites via direct interaction with NP. Plays critical roles in the final steps of viral release by interacting with host TSG101, a member of the vacuolar protein-sorting pathway and using other cellular host proteins involved in vesicle formation pathway. The budding of the virus progeny occurs after association of protein Z with the viral glycoprotein complex SSP-GP1-GP2 at the cell periphery, step that requires myristoylation of protein Z. Also selectively represses protein production by associating with host eIF4E. In cell-based minigenome assay, has an inhibitory effect on the ribonucleoprotein machinery (vRNP), which is responsible for the replication and transcription of the viral genome. This Bear Canyon mammarenavirus (isolate Mouse/United States/AV A0070039/2000) (BCNV) protein is RING finger protein Z.